A 493-amino-acid chain; its full sequence is Alpha-amylase-related protein (493 aa).

The N-terminal stretch at 1–19 (MFKFATAVILCLAASSTLA) is a signal peptide. At Gln20 the chain carries Pyrrolidone carboxylic acid. A disulfide bond links Cys47 and Cys103. Positions 117, 168, and 177 each coordinate Ca(2+). Residues Cys156 and Cys170 are joined by a disulfide bond. Residue Arg205 coordinates chloride. The Nucleophile role is filled by Asp207. Residue His211 coordinates Ca(2+). The active-site Proton donor is Glu244. The chloride site is built by Asn307 and Arg342. 3 disulfide bridges follow: Cys375–Cys381, Cys417–Cys440, and Cys447–Cys459.

Belongs to the glycosyl hydrolase 13 family. Monomer. It depends on Ca(2+) as a cofactor. Requires chloride as cofactor.

Its subcellular location is the secreted. It catalyses the reaction Endohydrolysis of (1-&gt;4)-alpha-D-glucosidic linkages in polysaccharides containing three or more (1-&gt;4)-alpha-linked D-glucose units.. The sequence is that of Alpha-amylase-related protein (Amyrel) from Drosophila ananassae (Fruit fly).